A 1067-amino-acid chain; its full sequence is Chitinase-like protein C25A8.4 (1067 aa).

Residues Met-1–Cys-18 form the signal peptide. 3 consecutive GH18 domains span residues Pro-26–Thr-364, Cys-372–Gln-727, and Phe-743–Arg-1067. A disulfide bridge links Cys-30 with Cys-51. Residues Asn-47 and Asn-216 are each glycosylated (N-linked (GlcNAc...) asparagine). A disulfide bridge connects residues Cys-376 and Cys-397. N-linked (GlcNAc...) asparagine glycans are attached at residues Asn-475, Asn-538, and Asn-710. A disulfide bond links Cys-747 and Cys-768. N-linked (GlcNAc...) asparagine glycosylation is found at Asn-797 and Asn-830. Residue Glu-855 is the Proton donor of the active site. N-linked (GlcNAc...) asparagine glycosylation is found at Asn-887, Asn-933, and Asn-1010.

It belongs to the glycosyl hydrolase 18 family.

It localises to the secreted. Functionally, putative chitinase. The polypeptide is Chitinase-like protein C25A8.4 (cht-3) (Caenorhabditis elegans).